We begin with the raw amino-acid sequence, 277 residues long: uncharacterized protein (277 aa).

Helical transmembrane passes span 23–43, 61–81, 117–137, 144–164, 197–217, 221–241, and 243–263; these read CIGGLMSAIVGAMSGVTTAFI, FLIYFGIIFIIGLIVSAIIGG, LVLLNIIFYFIPAILFVFGIF, IIGAFLIIISILIFIISVISL, YIILVIIIAIINFIISLIVVL, IIDIFISYSALANSILTIIYI, and IKGISYALSTFVDFYLGVFSI.

It to M.jannaschii MJ1189.

It is found in the cell membrane. This is an uncharacterized protein from Methanocaldococcus jannaschii (strain ATCC 43067 / DSM 2661 / JAL-1 / JCM 10045 / NBRC 100440) (Methanococcus jannaschii).